A 454-amino-acid chain; its full sequence is Growth/differentiation factor 6 (454 aa).

A signal peptide spans 1-22 (MDTPRVLLWAIFLISFLWDLPG). Positions 23–334 (FQQASISSSS…LPSPGRRRRR (312 aa)) are excised as a propeptide. The segment at 28 to 93 (ISSSSSSSTE…QGQEPPGRGL (66 aa)) is disordered. Composition is skewed to basic and acidic residues over residues 39–52 (DSTKDVGNRKEGKM) and 60–73 (AEGRTPPEHGLRQK). Low complexity predominate over residues 81-92 (GQHQGQEPPGRG). N-linked (GlcNAc...) asparagine glycosylation occurs at N117. Disordered regions lie at residues 247 to 268 (DTGARARGPQQPPPLDLRSLGF) and 303 to 350 (AEAA…KKSR). Low complexity predominate over residues 303-319 (AEAAGAEGSWPAPSGSP). Residues 329–350 (GRRRRRTAFASRHGKRHGKKSR) are compositionally biased toward basic residues. 3 disulfide bridges follow: C353-C419, C382-C451, and C386-C453.

It belongs to the TGF-beta family. In terms of assembly, homodimer; disulfide-linked. As to expression, expressed in different subsets of developing joints. Highly expressed in the cochlea.

It localises to the secreted. Its function is as follows. Growth factor that controls proliferation and cellular differentiation in the retina and bone formation. Plays a key role in regulating apoptosis during retinal development. Establishes dorsal-ventral positional information in the retina and controls the formation of the retinotectal map. Required for normal formation of bones and joints in the limbs, skull, digits and axial skeleton. Plays a key role in establishing boundaries between skeletal elements during development. Regulation of GDF6 expression seems to be a mechanism for evolving species-specific changes in skeletal structures. Seems to positively regulate differentiation of chondrogenic tissue through the growth factor receptors subunits BMPR1A, BMPR1B, BMPR2 and ACVR2A, leading to the activation of SMAD1-SMAD5-SMAD8 complex. The regulation of chondrogenic differentiation is inhibited by NOG. Also involved in the induction of adipogenesis from mesenchymal stem cells. This mechanism acts through the growth factor receptors subunits BMPR1A, BMPR2 and ACVR2A and the activation of SMAD1-SMAD5-SMAD8 complex and MAPK14/p38. In Mus musculus (Mouse), this protein is Growth/differentiation factor 6 (Gdf6).